The following is an 873-amino-acid chain: Bifunctional heparan sulfate N-deacetylase/N-sulfotransferase 3 (873 aa).

Topologically, residues 1–13 are cytoplasmic; it reads MSFIMKPHRHFQR. Residues 14–34 traverse the membrane as a helical; Signal-anchor for type II membrane protein segment; sequence TLILLATFCMVSIIISAYYLY. Topologically, residues 35–873 are lumenal; it reads SGYKQESEVS…WLRQELQKVR (839 aa). The tract at residues 36-589 is heparan sulfate N-deacetylase 3; sequence GYKQESEVSG…KRHRDIWSKE (554 aa). 4 N-linked (GlcNAc...) asparagine glycosylation sites follow: N146, N226, N342, and N392. A heparan sulfate N-sulfotransferase 3 region spans residues 590-873; sequence KTCDRLPKFL…WLRQELQKVR (284 aa). The For sulfotransferase activity role is filled by K605. 605 to 609 lines the 3'-phosphoadenylyl sulfate pocket; the sequence is KTGTT. N-linked (GlcNAc...) asparagine glycosylation occurs at N658. Residue S703 coordinates 3'-phosphoadenylyl sulfate. N794 is a glycosylation site (N-linked (GlcNAc...) asparagine). Residues C809 and C819 are joined by a disulfide bond. 824-828 serves as a coordination point for 3'-phosphoadenylyl sulfate; that stretch reads KGRKY.

It belongs to the sulfotransferase 1 family. NDST subfamily. As to quaternary structure, monomer. Strongly expressed strongly in brain. Expressed at high level at embryonic day 11 compared to other stages of development. Weakly expressed in adult heart, kidney, muscle, endothelial cells and testis but not in other tissues.

The protein localises to the golgi apparatus membrane. The enzyme catalyses alpha-D-glucosaminyl-[heparan sulfate](n) + 3'-phosphoadenylyl sulfate = N-sulfo-alpha-D-glucosaminyl-[heparan sulfate](n) + adenosine 3',5'-bisphosphate + 2 H(+). It participates in glycan metabolism; heparan sulfate biosynthesis. It functions in the pathway glycan metabolism; heparin biosynthesis. Functionally, essential bifunctional enzyme that catalyzes both the N-deacetylation and the N-sulfation of glucosamine (GlcNAc) of the glycosaminoglycan in heparan sulfate. Modifies the GlcNAc-GlcA disaccharide repeating sugar backbone to make N-sulfated heparosan, a prerequisite substrate for later modifications in heparin biosynthesis. Has high deacetylase activity but low sulfotransferase activity. The sequence is that of Bifunctional heparan sulfate N-deacetylase/N-sulfotransferase 3 (Ndst3) from Mus musculus (Mouse).